The sequence spans 158 residues: Lipoprotein signal peptidase (158 aa).

4 helical membrane passes run 7–27, 38–58, 67–87, and 95–115; these read LFWI…YWVV, ILPG…FSLF, WLSL…PVLE, and GLIL…GYVV. Residues Asp116 and Asp132 contribute to the active site. The chain crosses the membrane as a helical span at residues 125-145; it reads FAVFNMADSFISIGIVCLLLA.

This sequence belongs to the peptidase A8 family.

The protein resides in the cell inner membrane. It carries out the reaction Release of signal peptides from bacterial membrane prolipoproteins. Hydrolyzes -Xaa-Yaa-Zaa-|-(S,diacylglyceryl)Cys-, in which Xaa is hydrophobic (preferably Leu), and Yaa (Ala or Ser) and Zaa (Gly or Ala) have small, neutral side chains.. It participates in protein modification; lipoprotein biosynthesis (signal peptide cleavage). Its function is as follows. This protein specifically catalyzes the removal of signal peptides from prolipoproteins. This is Lipoprotein signal peptidase from Trichormus variabilis (strain ATCC 29413 / PCC 7937) (Anabaena variabilis).